A 493-amino-acid polypeptide reads, in one-letter code: Stage V sporulation protein AF (493 aa).

A run of 5 helical transmembrane segments spans residues 296-316, 334-354, 363-383, 387-407, and 418-438; these read FFGILASTLFLPIWFLFVLQP, IPIILQIFLADLGIEFLRMAA, TAMGLIAAVLIGQIAIEVGLF, VILYVSLAAIGTFTTPSYELS, and MILVALFHIKGLVIGFTVLII.

Belongs to the GerABKA family.

Its subcellular location is the cell membrane. The polypeptide is Stage V sporulation protein AF (spoVAF) (Bacillus subtilis (strain 168)).